We begin with the raw amino-acid sequence, 291 residues long: tRNA dimethylallyltransferase (291 aa).

An ATP-binding site is contributed by 5 to 12 (GPTAGGKS). A substrate-binding site is contributed by 7–12 (TAGGKS). Residues 30 to 33 (DSMQ) form an interaction with substrate tRNA region.

The protein belongs to the IPP transferase family. Monomer. The cofactor is Mg(2+).

The catalysed reaction is adenosine(37) in tRNA + dimethylallyl diphosphate = N(6)-dimethylallyladenosine(37) in tRNA + diphosphate. In terms of biological role, catalyzes the transfer of a dimethylallyl group onto the adenine at position 37 in tRNAs that read codons beginning with uridine, leading to the formation of N6-(dimethylallyl)adenosine (i(6)A). This chain is tRNA dimethylallyltransferase, found in Frankia casuarinae (strain DSM 45818 / CECT 9043 / HFP020203 / CcI3).